A 375-amino-acid chain; its full sequence is Aminomethyltransferase (375 aa).

It belongs to the GcvT family. In terms of assembly, the glycine cleavage system is composed of four proteins: P, T, L and H.

The catalysed reaction is N(6)-[(R)-S(8)-aminomethyldihydrolipoyl]-L-lysyl-[protein] + (6S)-5,6,7,8-tetrahydrofolate = N(6)-[(R)-dihydrolipoyl]-L-lysyl-[protein] + (6R)-5,10-methylene-5,6,7,8-tetrahydrofolate + NH4(+). The glycine cleavage system catalyzes the degradation of glycine. This is Aminomethyltransferase from Cupriavidus necator (strain ATCC 17699 / DSM 428 / KCTC 22496 / NCIMB 10442 / H16 / Stanier 337) (Ralstonia eutropha).